The chain runs to 122 residues: Large ribosomal subunit protein uL14 (122 aa).

The protein belongs to the universal ribosomal protein uL14 family. As to quaternary structure, part of the 50S ribosomal subunit. Forms a cluster with proteins L3 and L19. In the 70S ribosome, L14 and L19 interact and together make contacts with the 16S rRNA in bridges B5 and B8.

Functionally, binds to 23S rRNA. Forms part of two intersubunit bridges in the 70S ribosome. The protein is Large ribosomal subunit protein uL14 of Xylella fastidiosa (strain 9a5c).